A 48-amino-acid polypeptide reads, in one-letter code: Light-harvesting protein B-870 beta chain (48 aa).

At A2 to K21 the chain is on the cytoplasmic side. The a bacteriochlorophyll site is built by H20 and H38. The helical transmembrane segment at F22 to W44 threads the bilayer. Residues R45–L48 lie on the Periplasmic side of the membrane.

In terms of assembly, an alpha/beta heterodimer. The core complex is formed by different alpha and beta chains, binding bacteriochlorophyll molecules, and arranged most probably in tetrameric structures disposed around the reaction center. The non-pigmented gamma chains may constitute additional components.

It localises to the cell inner membrane. Antenna complexes are light-harvesting systems, which transfer the excitation energy to the reaction centers. In Rubrivivax gelatinosus (Rhodocyclus gelatinosus), this protein is Light-harvesting protein B-870 beta chain (pufB).